A 482-amino-acid chain; its full sequence is Islet cell autoantigen 1-like protein (482 aa).

The 204-residue stretch at 44-247 (ASDAELDAKL…TARMMSQIHE (204 aa)) folds into the AH domain. Disordered stretches follow at residues 365 to 393 (TQEC…PLAH) and 427 to 449 (SHTD…PNNG). 2 stretches are compositionally biased toward polar residues: residues 366–385 (QECQ…QEPS) and 428–449 (HTDN…PNNG).

This chain is Islet cell autoantigen 1-like protein (ICA1L), found in Homo sapiens (Human).